Consider the following 41-residue polypeptide: Large ribosomal subunit protein bL36 (41 aa).

The protein belongs to the bacterial ribosomal protein bL36 family.

This chain is Large ribosomal subunit protein bL36, found in Erythrobacter litoralis (strain HTCC2594).